Here is a 209-residue protein sequence, read N- to C-terminus: MKLRGLYAITDSQLLAGKFLAYVEAALDGGVTLLQYRDKSSDEARRLREAEKLRELCSRYKTQLIINDDAELAARLGVGVHLGQTDGPLTPARALLGSKAIIGSTCHSQIELAEQAAKEGASYVAFGRFFNSNTKPGAPAATVEMLAQARARVQLPICVIGGITLENAEPLVAHGADLLAVVHGLFGADSTQEVTRRARAFNDLLKISV.

4-amino-2-methyl-5-(diphosphooxymethyl)pyrimidine contacts are provided by residues 35-39 (QYRDK) and N67. Mg(2+) is bound by residues D68 and D86. T105 lines the 4-amino-2-methyl-5-(diphosphooxymethyl)pyrimidine pocket. 132–134 (SNT) contacts 2-[(2R,5Z)-2-carboxy-4-methylthiazol-5(2H)-ylidene]ethyl phosphate. K135 is a binding site for 4-amino-2-methyl-5-(diphosphooxymethyl)pyrimidine. G162 serves as a coordination point for 2-[(2R,5Z)-2-carboxy-4-methylthiazol-5(2H)-ylidene]ethyl phosphate.

Belongs to the thiamine-phosphate synthase family. Mg(2+) serves as cofactor.

The catalysed reaction is 2-[(2R,5Z)-2-carboxy-4-methylthiazol-5(2H)-ylidene]ethyl phosphate + 4-amino-2-methyl-5-(diphosphooxymethyl)pyrimidine + 2 H(+) = thiamine phosphate + CO2 + diphosphate. The enzyme catalyses 2-(2-carboxy-4-methylthiazol-5-yl)ethyl phosphate + 4-amino-2-methyl-5-(diphosphooxymethyl)pyrimidine + 2 H(+) = thiamine phosphate + CO2 + diphosphate. It carries out the reaction 4-methyl-5-(2-phosphooxyethyl)-thiazole + 4-amino-2-methyl-5-(diphosphooxymethyl)pyrimidine + H(+) = thiamine phosphate + diphosphate. Its pathway is cofactor biosynthesis; thiamine diphosphate biosynthesis; thiamine phosphate from 4-amino-2-methyl-5-diphosphomethylpyrimidine and 4-methyl-5-(2-phosphoethyl)-thiazole: step 1/1. Condenses 4-methyl-5-(beta-hydroxyethyl)thiazole monophosphate (THZ-P) and 2-methyl-4-amino-5-hydroxymethyl pyrimidine pyrophosphate (HMP-PP) to form thiamine monophosphate (TMP). The polypeptide is Thiamine-phosphate synthase (Pseudomonas fluorescens (strain SBW25)).